Consider the following 313-residue polypeptide: Jacalin-related lectin 8 (313 aa).

The signal sequence occupies residues 1-23 (MFIIYLFIFLSSAIIDSNGVAMA). 2 consecutive Jacalin-type lectin domains span residues 24 to 163 (QKIE…YVKT) and 165 to 309 (PTKS…YFSP).

The protein belongs to the jacalin lectin family.

This is Jacalin-related lectin 8 (JAL8) from Arabidopsis thaliana (Mouse-ear cress).